Consider the following 374-residue polypeptide: Glutamate 5-kinase (374 aa).

Lysine 16 contributes to the ATP binding site. Substrate is bound by residues serine 56, aspartate 143, and asparagine 155. ATP-binding positions include 175 to 176 and 217 to 223; these read TD and SGGMLTK. Positions 282–360 constitute a PUA domain; the sequence is RGALILDDGA…SNIGAILGYK (79 aa).

It belongs to the glutamate 5-kinase family.

Its subcellular location is the cytoplasm. It carries out the reaction L-glutamate + ATP = L-glutamyl 5-phosphate + ADP. Its pathway is amino-acid biosynthesis; L-proline biosynthesis; L-glutamate 5-semialdehyde from L-glutamate: step 1/2. Catalyzes the transfer of a phosphate group to glutamate to form L-glutamate 5-phosphate. This chain is Glutamate 5-kinase, found in Marinomonas sp. (strain MWYL1).